The sequence spans 298 residues: NAD kinase (298 aa).

D80 functions as the Proton acceptor in the catalytic mechanism. NAD(+) contacts are provided by residues 80–81 (DG), 154–155 (ND), R182, D184, 195–200 (TAYALS), A219, and Q253.

This sequence belongs to the NAD kinase family. Requires a divalent metal cation as cofactor.

Its subcellular location is the cytoplasm. The catalysed reaction is NAD(+) + ATP = ADP + NADP(+) + H(+). In terms of biological role, involved in the regulation of the intracellular balance of NAD and NADP, and is a key enzyme in the biosynthesis of NADP. Catalyzes specifically the phosphorylation on 2'-hydroxyl of the adenosine moiety of NAD to yield NADP. The sequence is that of NAD kinase from Acidovorax sp. (strain JS42).